Reading from the N-terminus, the 507-residue chain is ATP synthase subunit alpha, chloroplastic (507 aa).

Residue 170–177 (GDRQTGKT) coordinates ATP.

Belongs to the ATPase alpha/beta chains family. F-type ATPases have 2 components, CF(1) - the catalytic core - and CF(0) - the membrane proton channel. CF(1) has five subunits: alpha(3), beta(3), gamma(1), delta(1), epsilon(1). CF(0) has four main subunits: a, b, b' and c.

Its subcellular location is the plastid. It is found in the chloroplast thylakoid membrane. The enzyme catalyses ATP + H2O + 4 H(+)(in) = ADP + phosphate + 5 H(+)(out). In terms of biological role, produces ATP from ADP in the presence of a proton gradient across the membrane. The alpha chain is a regulatory subunit. The sequence is that of ATP synthase subunit alpha, chloroplastic from Tetradesmus obliquus (Green alga).